A 104-amino-acid chain; its full sequence is Large ribosomal subunit protein uL23 (104 aa).

This sequence belongs to the universal ribosomal protein uL23 family. As to quaternary structure, part of the 50S ribosomal subunit. Contacts protein L29, and trigger factor when it is bound to the ribosome.

Its function is as follows. One of the early assembly proteins it binds 23S rRNA. One of the proteins that surrounds the polypeptide exit tunnel on the outside of the ribosome. Forms the main docking site for trigger factor binding to the ribosome. In Rhodospirillum rubrum (strain ATCC 11170 / ATH 1.1.1 / DSM 467 / LMG 4362 / NCIMB 8255 / S1), this protein is Large ribosomal subunit protein uL23.